We begin with the raw amino-acid sequence, 404 residues long: Type I restriction enzyme EcoR124I/EcoR124II specificity subunit (404 aa).

The target-recognition domain 1 stretch occupies residues 1-153 (MSEMSYLEKL…PIPCPDNPEK (153 aa)). The conserved region 1 stretch occupies residues 154–199 (SLAIQSEIVRILDKFTALTAELTAELNMRKKQYNYYRDQLLSFKEG). The segment at 200 to 349 (EVEWKTLGEI…KLFSFKIPVP (150 aa)) is target-recognition domain 2. A conserved region 2 region spans residues 350-404 (NINEQQRIVEILDKFDTLTNSITEGLPREIELRQKQYEYYRDLLFSFPKPETVSN).

The protein belongs to the type-I restriction system S methylase family. The type I restriction/modification system is composed of three polypeptides R, M and S; the restriction enzyme has stoichiometry R(2)M(2)S(1) while the methyltransferase is M(2)S(1). There is an equilibrium between R(2)M(2)S(1) and R(1)M(2)S(1); the latter is methylation and translocation proficient but restriction deficient. In terms of assembly, (Microbial infection) Holoenenzyme interacts with Escherichia phage T7 protein Ocr; this interaction leads to the inhibition of the restriction activity, but may still allow methylation and translocation.

Its function is as follows. The specificity (S) subunit of a type I restriction enzyme; this subunit dictates DNA sequence specificity. The presence or absence of a 4-residue repeat changes the sequence specificity; a third copy of TAEL inserted at position 179-180 changes the recognition site from 5'-GAAN(6)RTCG-3' (for EcoR124I) to 5'-GAAN(7)RTCG-3' (for EcoR124II). The M and S subunits together form a methyltransferase (MTase) that methylates A-3 on the top and bottom strand of the sequence 5'-GAAN(7)RTCG-3'. In the presence of the R subunit the complex can also act as an endonuclease, binding to the same target sequence but cutting the DNA some distance from this site. Whether the DNA is cut or modified depends on the methylation state of the target sequence. When the target site is unmodified, the DNA is cut. When the target site is hemimethylated, the complex acts as a maintenance MTase modifying the DNA so that both strands become methylated. After locating a non-methylated recognition site, the enzyme complex serves as a molecular motor that translocates DNA in an ATP-dependent manner until a collision occurs that triggers cleavage. The R(1)M(2)S(1) complex translocates an average of 555 bp/second on nicked DNA; the R(2)M(2)S(1) complex translocates at double that speed. The 2 R subunit motors are independent and track along the helical pitch of the DNA, inducing positive supercoiling ahead of themselves. The polypeptide is Type I restriction enzyme EcoR124I/EcoR124II specificity subunit (hsdS) (Escherichia coli).